Reading from the N-terminus, the 347-residue chain is Holliday junction branch migration complex subunit RuvB (347 aa).

The interval 4-184 (QDRIVDGHAS…FGIVQRLEFY (181 aa)) is large ATPase domain (RuvB-L). ATP is bound by residues Arg24, Gly65, Lys68, Thr69, Thr70, 131–133 (EDF), Arg174, Tyr184, and Arg221. Residue Thr69 participates in Mg(2+) binding. Residues 185 to 255 (SVQDLTHIVK…IADSALNMLN (71 aa)) form a small ATPAse domain (RuvB-S) region. The interval 258 to 347 (HHGFDHMDRR…SQQQDSLPGI (90 aa)) is head domain (RuvB-H). Arg294, Arg313, and Arg318 together coordinate DNA.

The protein belongs to the RuvB family. Homohexamer. Forms an RuvA(8)-RuvB(12)-Holliday junction (HJ) complex. HJ DNA is sandwiched between 2 RuvA tetramers; dsDNA enters through RuvA and exits via RuvB. An RuvB hexamer assembles on each DNA strand where it exits the tetramer. Each RuvB hexamer is contacted by two RuvA subunits (via domain III) on 2 adjacent RuvB subunits; this complex drives branch migration. In the full resolvosome a probable DNA-RuvA(4)-RuvB(12)-RuvC(2) complex forms which resolves the HJ.

The protein localises to the cytoplasm. It carries out the reaction ATP + H2O = ADP + phosphate + H(+). Functionally, the RuvA-RuvB-RuvC complex processes Holliday junction (HJ) DNA during genetic recombination and DNA repair, while the RuvA-RuvB complex plays an important role in the rescue of blocked DNA replication forks via replication fork reversal (RFR). RuvA specifically binds to HJ cruciform DNA, conferring on it an open structure. The RuvB hexamer acts as an ATP-dependent pump, pulling dsDNA into and through the RuvAB complex. RuvB forms 2 homohexamers on either side of HJ DNA bound by 1 or 2 RuvA tetramers; 4 subunits per hexamer contact DNA at a time. Coordinated motions by a converter formed by DNA-disengaged RuvB subunits stimulates ATP hydrolysis and nucleotide exchange. Immobilization of the converter enables RuvB to convert the ATP-contained energy into a lever motion, pulling 2 nucleotides of DNA out of the RuvA tetramer per ATP hydrolyzed, thus driving DNA branch migration. The RuvB motors rotate together with the DNA substrate, which together with the progressing nucleotide cycle form the mechanistic basis for DNA recombination by continuous HJ branch migration. Branch migration allows RuvC to scan DNA until it finds its consensus sequence, where it cleaves and resolves cruciform DNA. This chain is Holliday junction branch migration complex subunit RuvB, found in Teredinibacter turnerae (strain ATCC 39867 / T7901).